Consider the following 212-residue polypeptide: MRSRLLLSVAHLPTIRETTEEMLLGGPGQEPPPSPSLDDYVRSISRLAQPTSVLDKATAQGQPRPPHRPAQACRKGRPAVSLRDITARFSGQQPTLPMADTVDPLDWLFGESQEKQPSQRDLPRRTGPSAGLWGPHRQMDSSKPMGAPRGRLCEARMPGHSLARPPQDGQQSSDLRSWTFGQSAQAMASRHRPRPSSVLRTLYSHLPVIHEL.

3 disordered regions span residues 20–39 (EEML…SLDD), 49–79 (QPTS…GRPA), and 113–176 (QEKQ…SDLR). The segment covering 113-124 (QEKQPSQRDLPR) has biased composition (basic and acidic residues).

In terms of tissue distribution, expressed in various tissues, including pancreas, placenta, ovary, testis and kidney.

It is found in the cytoplasm. The protein localises to the peroxisome. Its subcellular location is the mitochondrion. In terms of biological role, acts as a critical modulator of FOXO3-induced autophagy via increased cellular ROS. The protein is Protein DEPP1 of Homo sapiens (Human).